Consider the following 161-residue polypeptide: Cyclic pyranopterin monophosphate synthase (161 aa).

Substrate contacts are provided by residues 75–77 (LCH) and 113–114 (ME). Asp-128 is a catalytic residue.

The protein belongs to the MoaC family. As to quaternary structure, homohexamer; trimer of dimers.

It carries out the reaction (8S)-3',8-cyclo-7,8-dihydroguanosine 5'-triphosphate = cyclic pyranopterin phosphate + diphosphate. Its pathway is cofactor biosynthesis; molybdopterin biosynthesis. Its function is as follows. Catalyzes the conversion of (8S)-3',8-cyclo-7,8-dihydroguanosine 5'-triphosphate to cyclic pyranopterin monophosphate (cPMP). This Salmonella typhi protein is Cyclic pyranopterin monophosphate synthase.